Here is a 65-residue protein sequence, read N- to C-terminus: UPF0434 protein BH12860 (65 aa).

The protein belongs to the UPF0434 family.

In Bartonella henselae (strain ATCC 49882 / DSM 28221 / CCUG 30454 / Houston 1) (Rochalimaea henselae), this protein is UPF0434 protein BH12860.